The following is a 625-amino-acid chain: MDFKYDVIVIGAGHAGCEAAAAAANLGSKTCLITMDMNKVAQMSCNPAVGGIAKGQIVREIDALGGYMGLVTDQTAIQFRILNRSKGPAMWSPRAQCDRNKFIWAWREILENIPNLHIWQDTVKEIIVENGEVVGLKTFWDVTFHARCIVLTAGTFLNGLMHVGKTQLPGGRMAEPASYKLTESIAEHGIEYGRMKTGTPVRIDGRSVHYELMDTQDGECDFHKFSFMNTSVRHLKQLQCWTCFTNEEAHNVLRNGLADSPLFNGQIQSIGPRYCPSIETKIVTFPDKEQHQLFLEPEGETTQELYLNGFSSSLPMEIQIEALKKIPAFKDLVIYRPGYAIEYDYFDPTQLKHTLESKKIKNLFFAGQVNGTTGYEEAGGQGIIAGINAHINCHGGEPFTLARDEAYIGVLIDDLVTKGVDEPYRMFTSRAEYRILLRMDDADMRLTERAYKLGLVKEDRYALLKSKREAVENIVNFTRNYSIKAALINDALENLGTTPLRQGCKLIDLINRPQITIENISEYVPAFKRELDKITDERKEEILEAAEILIKYEGYIGRERIIADKLARLESIKIKGKFDYDSLQSLSTEARQKLKKIDPETIAQASRIPGVSPSDINVLLVLSGR.

Residues 11–16 (GAGHAG), V123, and S178 each bind FAD. An NAD(+)-binding site is contributed by 271-285 (GPRYCPSIETKIVTF). FAD is bound at residue Q368.

Belongs to the MnmG family. In terms of assembly, homodimer. Heterotetramer of two MnmE and two MnmG subunits. The cofactor is FAD.

The protein localises to the cytoplasm. Its function is as follows. NAD-binding protein involved in the addition of a carboxymethylaminomethyl (cmnm) group at the wobble position (U34) of certain tRNAs, forming tRNA-cmnm(5)s(2)U34. The chain is tRNA uridine 5-carboxymethylaminomethyl modification enzyme MnmG from Bacteroides fragilis (strain ATCC 25285 / DSM 2151 / CCUG 4856 / JCM 11019 / LMG 10263 / NCTC 9343 / Onslow / VPI 2553 / EN-2).